The sequence spans 249 residues: Probable transcriptional regulatory protein MXAN_4974 (249 aa).

It belongs to the TACO1 family.

It is found in the cytoplasm. The polypeptide is Probable transcriptional regulatory protein MXAN_4974 (Myxococcus xanthus (strain DK1622)).